The following is a 504-amino-acid chain: Bifunctional purine biosynthesis protein PurH (504 aa).

Positions 1 to 144 (MRKRALISVY…KSFKNVVVIS (144 aa)) constitute an MGS-like domain.

It belongs to the PurH family.

It catalyses the reaction (6R)-10-formyltetrahydrofolate + 5-amino-1-(5-phospho-beta-D-ribosyl)imidazole-4-carboxamide = 5-formamido-1-(5-phospho-D-ribosyl)imidazole-4-carboxamide + (6S)-5,6,7,8-tetrahydrofolate. The catalysed reaction is IMP + H2O = 5-formamido-1-(5-phospho-D-ribosyl)imidazole-4-carboxamide. The protein operates within purine metabolism; IMP biosynthesis via de novo pathway; 5-formamido-1-(5-phospho-D-ribosyl)imidazole-4-carboxamide from 5-amino-1-(5-phospho-D-ribosyl)imidazole-4-carboxamide (10-formyl THF route): step 1/1. It participates in purine metabolism; IMP biosynthesis via de novo pathway; IMP from 5-formamido-1-(5-phospho-D-ribosyl)imidazole-4-carboxamide: step 1/1. This Fusobacterium nucleatum subsp. nucleatum (strain ATCC 25586 / DSM 15643 / BCRC 10681 / CIP 101130 / JCM 8532 / KCTC 2640 / LMG 13131 / VPI 4355) protein is Bifunctional purine biosynthesis protein PurH.